The following is a 296-amino-acid chain: Cytochrome bc1 complex cytochrome c subunit (296 aa).

Residues methionine 1 to alanine 19 show a composition bias toward polar residues. Positions methionine 1 to lysine 27 are disordered. Residues valine 32 to isoleucine 52 traverse the membrane as a helical segment. 2 consecutive Cytochrome c domains span residues alanine 67–glycine 147 and leucine 177–lysine 255. Residues cysteine 80, cysteine 83, histidine 84, cysteine 190, cysteine 193, and histidine 194 each coordinate heme c. A helical membrane pass occupies residues glycine 274–serine 294.

The cytochrome bc1 complex is composed of a cytochrome b (QcrB), the Rieske iron-sulfur protein (QcrA) and a diheme cytochrome c (QcrC) subunit. The bc1 complex forms a supercomplex with cytochrome c oxidase (cytochrome aa3). Binds 2 heme c groups covalently per subunit.

It is found in the cell membrane. It catalyses the reaction a quinol + 2 Fe(III)-[cytochrome c](out) = a quinone + 2 Fe(II)-[cytochrome c](out) + 2 H(+)(out). Cytochrome c1 subunit of the cytochrome bc1 complex, an essential component of the respiratory electron transport chain required for ATP synthesis. The bc1 complex catalyzes the oxidation of menaquinol and the reduction of cytochrome c in the respiratory chain. The bc1 complex operates through a Q-cycle mechanism that couples electron transfer to generation of the proton gradient that drives ATP synthesis. The protein is Cytochrome bc1 complex cytochrome c subunit (qcrC) of Corynebacterium efficiens (strain DSM 44549 / YS-314 / AJ 12310 / JCM 11189 / NBRC 100395).